Consider the following 145-residue polypeptide: MEITKEIFSLIAAVMLLLGSFIALISAIGIVKFQDVFLRSHAATKSSTLSVLLTLIGVLIYFIVNTGFFSVRLLLSLVFINLTSPVGMHLVARAAYRNGAYMYRKNDAHTHASILLSSNEQNSTEALQLRAEKREEHRKKWYQND.

The next 3 helical transmembrane spans lie at 11–31, 51–71, and 72–92; these read IAAV…IGIV, VLLT…FFSV, and RLLL…HLVA.

It belongs to the CPA3 antiporters (TC 2.A.63) subunit G family. As to quaternary structure, may form a heterooligomeric complex that consists of seven subunits: mnhA2, mnhB2, mnhC2, mnhD2, mnhE2, mnhF2 and mnhG2.

It is found in the cell membrane. The sequence is that of Putative antiporter subunit mnhG2 (mnhG2) from Staphylococcus aureus (strain COL).